Here is a 624-residue protein sequence, read N- to C-terminus: Probable Xaa-Pro aminopeptidase P (624 aa).

Mn(2+)-binding residues include Asp414, Asp425, Glu530, and Glu544.

It belongs to the peptidase M24B family. Mn(2+) is required as a cofactor.

The catalysed reaction is Release of any N-terminal amino acid, including proline, that is linked to proline, even from a dipeptide or tripeptide.. Catalyzes the removal of a penultimate prolyl residue from the N-termini of peptides. In Chaetomium globosum (strain ATCC 6205 / CBS 148.51 / DSM 1962 / NBRC 6347 / NRRL 1970) (Soil fungus), this protein is Probable Xaa-Pro aminopeptidase P (AMPP).